The primary structure comprises 370 residues: Death-associated protein kinase 2 (370 aa).

One can recognise a Protein kinase domain in the interval 23 to 285 (YDIGEELGSG…IQEALRHPWI (263 aa)). ATP contacts are provided by residues 29 to 37 (LGSGQFAIV) and K52. D149 functions as the Proton acceptor in the catalytic mechanism. A calmodulin-binding region spans residues 287-354 (PVDTQQAMVR…RNCESDTEEN (68 aa)). Positions 292 to 301 (QAMVRRESVV) are autoinhibitory domain. Phosphoserine is present on S299. The residue at position 318 (S318) is a Phosphoserine; by autocatalysis. S349 is subject to Phosphoserine. T369 is subject to Phosphothreonine.

It belongs to the protein kinase superfamily. CAMK Ser/Thr protein kinase family. DAP kinase subfamily. As to quaternary structure, homodimer in its autoinhibited state. Active as monomer. Interacts with 14-3-3 proteins YWHAB, YWHAE, YWHAG, YWHAH, YWHAQ, YWHAZ and SFN; the interaction requires DAPK2 phosphorylation at Thr-369 and suppresses DAPK2 kinase activity and DAPK2-induced apoptosis. Requires Mg(2+) as cofactor. In terms of processing, autophosphorylation at Ser-318 inhibits its catalytic activity. Dephosphorylated at Ser-318 in response to activated Fas and TNF-alpha receptors. Expressed in peritubular interstitial cells of the renal cortex. Isoform 1 is found in the adult brain while isoform 2 is expressed in brains of embryos and young mice (at protein level).

Its subcellular location is the cytoplasm. The protein resides in the cytoplasmic vesicle. The protein localises to the autophagosome lumen. It carries out the reaction L-seryl-[protein] + ATP = O-phospho-L-seryl-[protein] + ADP + H(+). It catalyses the reaction L-threonyl-[protein] + ATP = O-phospho-L-threonyl-[protein] + ADP + H(+). Its activity is regulated as follows. Activated by Ca(2+)/calmodulin. Regulated by a double locking mechanism, involving autophosphorylation at Ser-318, calmodulin binding, and dimerization. In the inactive state, Ser-318 is phosphorylated, and the kinase is dimeric. Activation involves: dephosphorylation at Ser-318, release-of-autoinhibition mechanism where calmodulin binding induces a conformational change that relieves the steric block of the active site by the autoinhibitory domain, and generation of the monomeric active form of the kinase. Functionally, calcium/calmodulin-dependent serine/threonine kinase involved in multiple cellular signaling pathways that trigger cell survival, apoptosis, and autophagy. Capable of regulating both type I apoptotic and type II autophagic cell death signals. The former involves caspase activation, chromatin and mitochondrial condensation while the latter involves caspase-independent cell death in conjunction with accumulation of mature autophagic vesicles, plasma membrane blebs, and nuclear condensation without DNA degradation. Mediator of anoikis and a suppressor of beta-catenin-dependent anchorage-independent growth of malignant epithelial cells. May play a role in granulocytic maturation. Regulates granulocytes motility by controlling cell spreading and polarization. The polypeptide is Death-associated protein kinase 2 (Dapk2) (Mus musculus (Mouse)).